A 1944-amino-acid polypeptide reads, in one-letter code: uncharacterized protein (1944 aa).

Residues 908–999 are disordered; sequence SQNLNFLKSK…SESEEESSNG (92 aa). Composition is skewed to basic and acidic residues over residues 916–929 and 939–949; these read SKQE…ESAK and LSEKLNSDNHI. Residues 985–996 are compositionally biased toward acidic residues; sequence SDEDTSESEEES. 1293–1300 serves as a coordination point for ATP; that stretch reads GPPGTGKT. Positions 1824 to 1944 are disordered; sequence QEAHKVKKRH…PPKVEHFKRK (121 aa). Composition is skewed to basic and acidic residues over residues 1843–1852 and 1869–1891; these read GTERDEDIPN and KVTK…KIDE. The segment covering 1912-1922 has biased composition (basic residues); it reads GHMKKSKKPKS.

This sequence belongs to the DNA2/NAM7 helicase family.

Its subcellular location is the nucleus. This is an uncharacterized protein from Schizosaccharomyces pombe (strain 972 / ATCC 24843) (Fission yeast).